Reading from the N-terminus, the 354-residue chain is 5,10-methenyltetrahydromethanopterin hydrogenase (354 aa).

It belongs to the HMD family.

It catalyses the reaction 5,10-methenyl-5,6,7,8-tetrahydromethanopterin + H2 = 5,10-methylenetetrahydromethanopterin + H(+). The protein operates within one-carbon metabolism; methanogenesis from CO(2); 5,10-methylene-5,6,7,8-tetrahydromethanopterin from 5,10-methenyl-5,6,7,8-tetrahydromethanopterin (hydrogen route): step 1/1. Functionally, catalyzes the reversible reduction of methenyl-H(4)MPT(+) to methylene-H(4)MPT. The protein is 5,10-methenyltetrahydromethanopterin hydrogenase of Methanococcus maripaludis (strain C5 / ATCC BAA-1333).